A 204-amino-acid polypeptide reads, in one-letter code: Sex-determining region Y protein (204 aa).

Residues 59–136 (RVKRPMNAFI…YKYRPRRKAK (78 aa)) are sufficient for interaction with KPNB1. Positions 60–128 (VKRPMNAFIV…MHREKYPNYK (69 aa)) form a DNA-binding region, HMG box. Required for nuclear localization regions lie at residues 61–77 (KRPMNAFIVWSRDQRRK) and 130–136 (RPRRKAK). The segment at 107-139 (WPFFQEAQKLQAMHREKYPNYKYRPRRKAKMLP) is sufficient for interaction with EP300. Lys-136 is subject to N6-acetyllysine. The tract at residues 138–155 (LPKNCSLLPADPASVLCS) is necessary for interaction with ZNF208 isoform KRAB-O. Positions 175 to 204 (RMEHQLGHLPPINAASSPQQRDRYSHWTKL) are disordered. Basic and acidic residues predominate over residues 194–204 (QRDRYSHWTKL). A necessary for interaction with SLC9A3R2 region spans residues 198–204 (YSHWTKL).

It belongs to the SRY family. In terms of assembly, interacts with CALM, EP300, HDAC3, KPNB1, ZNF208 isoform KRAB-O, PARP1, SLC9A3R2 and WT1. The interaction with EP300 modulates its DNA-binding activity. The interaction with KPNB1 is sensitive to dissociation by Ran in the GTP-bound form. Interaction with PARP1 impaired its DNA-binding activity. In terms of processing, phosphorylated on serine residues by PKA. Phosphorylation by PKA enhances its DNA-binding activity and stimulates transcription repression. Acetylation of Lys-136 contributes to its nuclear localization and enhances its interaction with KPNB1. Deacetylated by HDAC3. Post-translationally, poly-ADP-ribosylated by PARP1. ADP-ribosylation reduces its DNA-binding activity.

The protein resides in the nucleus speckle. The protein localises to the cytoplasm. It localises to the nucleus. Transcriptional regulator that controls a genetic switch in male development. It is necessary and sufficient for initiating male sex determination by directing the development of supporting cell precursors (pre-Sertoli cells) as Sertoli rather than granulosa cells. Involved in different aspects of gene regulation including promoter activation or repression. Binds to the DNA consensus sequence 5'-[AT]AACAA[AT]-3'. SRY HMG box recognizes DNA by partial intercalation in the minor groove and promotes DNA bending. Also involved in pre-mRNA splicing. In male adult brain involved in the maintenance of motor functions of dopaminergic neurons. The protein is Sex-determining region Y protein of Homo sapiens (Human).